The sequence spans 507 residues: Cyclin-dependent kinase-like 2 (507 aa).

Positions 4 to 289 (YENLGLVGEG…CADLLHHDFF (286 aa)) constitute a Protein kinase domain. ATP-binding positions include 10-18 (VGEGSYGMV) and K33. The [NKR]KIAxRE motif lies at 45–51 (KKIAMRE). D126 functions as the Proton acceptor in the catalytic mechanism. Positions 365 to 392 (KTEKGTRASNGSCLHDNGTSHKGLSSTS) are disordered.

The protein belongs to the protein kinase superfamily. CMGC Ser/Thr protein kinase family. CDC2/CDKX subfamily.

The protein localises to the cytoplasm. The protein resides in the nucleus. It carries out the reaction L-seryl-[protein] + ATP = O-phospho-L-seryl-[protein] + ADP + H(+). It catalyses the reaction L-threonyl-[protein] + ATP = O-phospho-L-threonyl-[protein] + ADP + H(+). The protein is Cyclin-dependent kinase-like 2 of Rattus norvegicus (Rat).